Reading from the N-terminus, the 636-residue chain is 1-deoxy-D-xylulose-5-phosphate synthase (636 aa).

Thiamine diphosphate is bound by residues His75 and 116–118 (AHS). Asp147 is a Mg(2+) binding site. Residues 148–149 (GA), Asn177, Tyr288, and Glu370 each bind thiamine diphosphate. Asn177 is a Mg(2+) binding site.

Belongs to the transketolase family. DXPS subfamily. Homodimer. Mg(2+) is required as a cofactor. Requires thiamine diphosphate as cofactor.

The catalysed reaction is D-glyceraldehyde 3-phosphate + pyruvate + H(+) = 1-deoxy-D-xylulose 5-phosphate + CO2. It participates in metabolic intermediate biosynthesis; 1-deoxy-D-xylulose 5-phosphate biosynthesis; 1-deoxy-D-xylulose 5-phosphate from D-glyceraldehyde 3-phosphate and pyruvate: step 1/1. In terms of biological role, catalyzes the acyloin condensation reaction between C atoms 2 and 3 of pyruvate and glyceraldehyde 3-phosphate to yield 1-deoxy-D-xylulose-5-phosphate (DXP). The sequence is that of 1-deoxy-D-xylulose-5-phosphate synthase from Ralstonia nicotianae (strain ATCC BAA-1114 / GMI1000) (Ralstonia solanacearum).